Reading from the N-terminus, the 190-residue chain is ATP synthase subunit delta (190 aa).

Belongs to the ATPase delta chain family. As to quaternary structure, F-type ATPases have 2 components, F(1) - the catalytic core - and F(0) - the membrane proton channel. F(1) has five subunits: alpha(3), beta(3), gamma(1), delta(1), epsilon(1). F(0) has three main subunits: a(1), b(2) and c(10-14). The alpha and beta chains form an alternating ring which encloses part of the gamma chain. F(1) is attached to F(0) by a central stalk formed by the gamma and epsilon chains, while a peripheral stalk is formed by the delta and b chains.

It localises to the cell inner membrane. F(1)F(0) ATP synthase produces ATP from ADP in the presence of a proton or sodium gradient. F-type ATPases consist of two structural domains, F(1) containing the extramembraneous catalytic core and F(0) containing the membrane proton channel, linked together by a central stalk and a peripheral stalk. During catalysis, ATP synthesis in the catalytic domain of F(1) is coupled via a rotary mechanism of the central stalk subunits to proton translocation. Functionally, this protein is part of the stalk that links CF(0) to CF(1). It either transmits conformational changes from CF(0) to CF(1) or is implicated in proton conduction. In Methylobacterium sp. (strain 4-46), this protein is ATP synthase subunit delta.